The chain runs to 319 residues: Peroxidase 62 (319 aa).

The first 22 residues, 1–22 (MGLVRSFALVIVFLSCLIAVYG), serve as a signal peptide directing secretion. Disulfide bonds link Cys34–Cys110, Cys67–Cys72, Cys116–Cys315, and Cys195–Cys226. His65 serves as the catalytic Proton acceptor. Positions 66, 69, 71, 73, and 75 each coordinate Ca(2+). Position 157 (Pro157) interacts with substrate. Heme b is bound at residue His188. Thr189 provides a ligand contact to Ca(2+). Residue Asn204 is glycosylated (N-linked (GlcNAc...) asparagine). Ca(2+) is bound by residues Asp239, Ser242, and Asp247. A glycan (N-linked (GlcNAc...) asparagine) is linked at Asn253.

Belongs to the peroxidase family. Classical plant (class III) peroxidase subfamily. The cofactor is heme b. Ca(2+) serves as cofactor. In terms of tissue distribution, mainly expressed in roots.

It is found in the secreted. The catalysed reaction is 2 a phenolic donor + H2O2 = 2 a phenolic radical donor + 2 H2O. Functionally, removal of H(2)O(2), oxidation of toxic reductants, biosynthesis and degradation of lignin, suberization, auxin catabolism, response to environmental stresses such as wounding, pathogen attack and oxidative stress. These functions might be dependent on each isozyme/isoform in each plant tissue. The polypeptide is Peroxidase 62 (PER62) (Arabidopsis thaliana (Mouse-ear cress)).